Reading from the N-terminus, the 146-residue chain is MNILLINGPNLNLLGTREPEIYGSKTLNDIENDLSSIANDKIINLECFQSNHEGEIVDKIQDSIKNVQGILINAGAFTHTSISIRDALIGSKIPFVELHISNIFSREEFRKESFLTDKAIGIISGFGISSYSLGLYGIIEYLKNKK.

The Proton acceptor role is filled by tyrosine 22. The substrate site is built by asparagine 73, histidine 79, and aspartate 86. Histidine 99 acts as the Proton donor in catalysis. Substrate contacts are provided by residues 100-101 (IS) and arginine 110.

This sequence belongs to the type-II 3-dehydroquinase family. In terms of assembly, homododecamer.

The enzyme catalyses 3-dehydroquinate = 3-dehydroshikimate + H2O. Its pathway is metabolic intermediate biosynthesis; chorismate biosynthesis; chorismate from D-erythrose 4-phosphate and phosphoenolpyruvate: step 3/7. Its function is as follows. Catalyzes a trans-dehydration via an enolate intermediate. This chain is 3-dehydroquinate dehydratase, found in Prochlorococcus marinus (strain MIT 9515).